Here is a 201-residue protein sequence, read N- to C-terminus: Recombination protein RecR (201 aa).

Residues Cys57–Cys72 form a C4-type zinc finger. Residues Gly81–Pro176 enclose the Toprim domain.

It belongs to the RecR family.

In terms of biological role, may play a role in DNA repair. It seems to be involved in an RecBC-independent recombinational process of DNA repair. It may act with RecF and RecO. This Edwardsiella ictaluri (strain 93-146) protein is Recombination protein RecR.